Here is a 205-residue protein sequence, read N- to C-terminus: Glycerol-3-phosphate acyltransferase (205 aa).

Transmembrane regions (helical) follow at residues 4-24 (IAPG…AILV), 80-100 (PFWL…PVFF), 107-127 (GVAT…GVMA), 130-150 (WLLT…SALI), and 155-175 (VWWF…LILL).

It belongs to the PlsY family. In terms of assembly, probably interacts with PlsX.

The protein localises to the cell inner membrane. The enzyme catalyses an acyl phosphate + sn-glycerol 3-phosphate = a 1-acyl-sn-glycero-3-phosphate + phosphate. It participates in lipid metabolism; phospholipid metabolism. In terms of biological role, catalyzes the transfer of an acyl group from acyl-phosphate (acyl-PO(4)) to glycerol-3-phosphate (G3P) to form lysophosphatidic acid (LPA). This enzyme utilizes acyl-phosphate as fatty acyl donor, but not acyl-CoA or acyl-ACP. This is Glycerol-3-phosphate acyltransferase from Klebsiella pneumoniae (strain 342).